The following is a 138-amino-acid chain: Sec-independent protein translocase protein TatB (138 aa).

Residues 2–18 (SFGEIIVILVVAILVLG) traverse the membrane as a helical segment. Positions 109–138 (NNLSGQNLNTEEKPNLSKLETQDKNGKINV) are disordered. Residues 118-138 (TEEKPNLSKLETQDKNGKINV) are compositionally biased toward basic and acidic residues.

It belongs to the TatB family. As to quaternary structure, the Tat system comprises two distinct complexes: a TatABC complex, containing multiple copies of TatA, TatB and TatC subunits, and a separate TatA complex, containing only TatA subunits. Substrates initially bind to the TatABC complex, which probably triggers association of the separate TatA complex to form the active translocon.

Its subcellular location is the cell inner membrane. Part of the twin-arginine translocation (Tat) system that transports large folded proteins containing a characteristic twin-arginine motif in their signal peptide across membranes. Together with TatC, TatB is part of a receptor directly interacting with Tat signal peptides. TatB may form an oligomeric binding site that transiently accommodates folded Tat precursor proteins before their translocation. This is Sec-independent protein translocase protein TatB from Campylobacter jejuni subsp. jejuni serotype O:2 (strain ATCC 700819 / NCTC 11168).